The chain runs to 315 residues: Tyrosine recombinase XerC (315 aa).

Residues methionine 1–valine 103 enclose the Core-binding (CB) domain. A Tyr recombinase domain is found at glutamate 124–aspartate 306. Active-site residues include arginine 164, lysine 188, histidine 258, arginine 261, and histidine 284. The active-site O-(3'-phospho-DNA)-tyrosine intermediate is the tyrosine 293.

Belongs to the 'phage' integrase family. XerC subfamily. As to quaternary structure, forms a cyclic heterotetrameric complex composed of two molecules of XerC and two molecules of XerD.

The protein localises to the cytoplasm. Functionally, site-specific tyrosine recombinase, which acts by catalyzing the cutting and rejoining of the recombining DNA molecules. The XerC-XerD complex is essential to convert dimers of the bacterial chromosome into monomers to permit their segregation at cell division. It also contributes to the segregational stability of plasmids. This chain is Tyrosine recombinase XerC, found in Chlamydia trachomatis serovar L2b (strain UCH-1/proctitis).